Consider the following 260-residue polypeptide: UPF0328 protein ECU07_1870/ECU10_0030 (260 aa).

It belongs to the UPF0328 family.

The sequence is that of UPF0328 protein ECU07_1870/ECU10_0030 from Encephalitozoon cuniculi (strain GB-M1) (Microsporidian parasite).